Reading from the N-terminus, the 362-residue chain is Probable dual-specificity RNA methyltransferase RlmN (362 aa).

Glu91 (proton acceptor) is an active-site residue. Residues 97 to 329 (QHYGLSVCVT…KKNGVNCVVR (233 aa)) enclose the Radical SAM core domain. Cys104 and Cys340 are oxidised to a cystine. 3 residues coordinate [4Fe-4S] cluster: Cys111, Cys115, and Cys118. Residues 163–164 (GE), Ser195, 218–220 (SLH), and Asn296 contribute to the S-adenosyl-L-methionine site. Cys340 serves as the catalytic S-methylcysteine intermediate.

The protein belongs to the radical SAM superfamily. RlmN family. Requires [4Fe-4S] cluster as cofactor.

The protein resides in the cytoplasm. The enzyme catalyses adenosine(2503) in 23S rRNA + 2 reduced [2Fe-2S]-[ferredoxin] + 2 S-adenosyl-L-methionine = 2-methyladenosine(2503) in 23S rRNA + 5'-deoxyadenosine + L-methionine + 2 oxidized [2Fe-2S]-[ferredoxin] + S-adenosyl-L-homocysteine. The catalysed reaction is adenosine(37) in tRNA + 2 reduced [2Fe-2S]-[ferredoxin] + 2 S-adenosyl-L-methionine = 2-methyladenosine(37) in tRNA + 5'-deoxyadenosine + L-methionine + 2 oxidized [2Fe-2S]-[ferredoxin] + S-adenosyl-L-homocysteine. Specifically methylates position 2 of adenine 2503 in 23S rRNA and position 2 of adenine 37 in tRNAs. The protein is Probable dual-specificity RNA methyltransferase RlmN of Streptococcus gordonii (strain Challis / ATCC 35105 / BCRC 15272 / CH1 / DL1 / V288).